We begin with the raw amino-acid sequence, 614 residues long: 4-hydroxy-3-methylbut-2-en-1-yl diphosphate synthase (flavodoxin) (614 aa).

Cys-522, Cys-525, Cys-556, and Glu-563 together coordinate [4Fe-4S] cluster.

Belongs to the IspG family. [4Fe-4S] cluster serves as cofactor.

It catalyses the reaction (2E)-4-hydroxy-3-methylbut-2-enyl diphosphate + oxidized [flavodoxin] + H2O + 2 H(+) = 2-C-methyl-D-erythritol 2,4-cyclic diphosphate + reduced [flavodoxin]. It functions in the pathway isoprenoid biosynthesis; isopentenyl diphosphate biosynthesis via DXP pathway; isopentenyl diphosphate from 1-deoxy-D-xylulose 5-phosphate: step 5/6. In terms of biological role, converts 2C-methyl-D-erythritol 2,4-cyclodiphosphate (ME-2,4cPP) into 1-hydroxy-2-methyl-2-(E)-butenyl 4-diphosphate. The chain is 4-hydroxy-3-methylbut-2-en-1-yl diphosphate synthase (flavodoxin) from Phocaeicola vulgatus (strain ATCC 8482 / DSM 1447 / JCM 5826 / CCUG 4940 / NBRC 14291 / NCTC 11154) (Bacteroides vulgatus).